We begin with the raw amino-acid sequence, 450 residues long: tRNA-2-methylthio-N(6)-dimethylallyladenosine synthase (450 aa).

The region spanning 7-127 (KRLYIKTYGC…LPELIARAHR (121 aa)) is the MTTase N-terminal domain. Residues C16, C52, C90, C165, C169, and C172 each coordinate [4Fe-4S] cluster. The Radical SAM core domain maps to 151–378 (QVSGVSAFLT…NQLLDEQQKA (228 aa)). The region spanning 381-443 (ILQVGKTMPV…KMSLGGVLET (63 aa)) is the TRAM domain.

The protein belongs to the methylthiotransferase family. MiaB subfamily. In terms of assembly, monomer. [4Fe-4S] cluster is required as a cofactor.

The protein localises to the cytoplasm. The catalysed reaction is N(6)-dimethylallyladenosine(37) in tRNA + (sulfur carrier)-SH + AH2 + 2 S-adenosyl-L-methionine = 2-methylsulfanyl-N(6)-dimethylallyladenosine(37) in tRNA + (sulfur carrier)-H + 5'-deoxyadenosine + L-methionine + A + S-adenosyl-L-homocysteine + 2 H(+). Functionally, catalyzes the methylthiolation of N6-(dimethylallyl)adenosine (i(6)A), leading to the formation of 2-methylthio-N6-(dimethylallyl)adenosine (ms(2)i(6)A) at position 37 in tRNAs that read codons beginning with uridine. This chain is tRNA-2-methylthio-N(6)-dimethylallyladenosine synthase, found in Caulobacter sp. (strain K31).